A 64-amino-acid polypeptide reads, in one-letter code: Large ribosomal subunit protein bL32 (64 aa).

Belongs to the bacterial ribosomal protein bL32 family.

This is Large ribosomal subunit protein bL32 from Bifidobacterium longum (strain DJO10A).